The chain runs to 283 residues: Pantothenate synthetase (283 aa).

30-37 contacts ATP; that stretch reads MGYLHDGH. Residue histidine 37 is the Proton donor of the active site. Glutamine 61 contacts (R)-pantoate. Glutamine 61 contributes to the beta-alanine binding site. An ATP-binding site is contributed by 148–151; that stretch reads GQKD. Glutamine 154 lines the (R)-pantoate pocket. 185-188 lines the ATP pocket; it reads MSSR.

It belongs to the pantothenate synthetase family. Homodimer.

It localises to the cytoplasm. It carries out the reaction (R)-pantoate + beta-alanine + ATP = (R)-pantothenate + AMP + diphosphate + H(+). It participates in cofactor biosynthesis; (R)-pantothenate biosynthesis; (R)-pantothenate from (R)-pantoate and beta-alanine: step 1/1. Its function is as follows. Catalyzes the condensation of pantoate with beta-alanine in an ATP-dependent reaction via a pantoyl-adenylate intermediate. The polypeptide is Pantothenate synthetase (Carboxydothermus hydrogenoformans (strain ATCC BAA-161 / DSM 6008 / Z-2901)).